The following is a 132-amino-acid chain: uncharacterized protein (132 aa).

3 helical membrane-spanning segments follow: residues 18-38 (MLFI…FIGI), 50-70 (IIYF…GVFI), and 71-91 (VVPL…LYLI).

The protein resides in the cell membrane. This is an uncharacterized protein from Bacillus subtilis (strain 168).